Here is a 333-residue protein sequence, read N- to C-terminus: Flap endonuclease 1 (333 aa).

Positions 1–99 are N-domain; sequence MGVALREVLT…ETIESRREVR (99 aa). The Mg(2+) site is built by Asp28, Asp81, Glu153, Glu155, Asp174, Asp176, and Asp235. Residues 117–256 form an I-domain region; that stretch reads EAYKQARASS…TALKIVKKDG (140 aa). The interval 325-333 is interaction with PCNA; it reads GQKTLDRWF.

Belongs to the XPG/RAD2 endonuclease family. FEN1 subfamily. Interacts with PCNA. PCNA stimulates the nuclease activity without altering cleavage specificity. The cofactor is Mg(2+).

Structure-specific nuclease with 5'-flap endonuclease and 5'-3' exonuclease activities involved in DNA replication and repair. During DNA replication, cleaves the 5'-overhanging flap structure that is generated by displacement synthesis when DNA polymerase encounters the 5'-end of a downstream Okazaki fragment. Binds the unpaired 3'-DNA end and kinks the DNA to facilitate 5' cleavage specificity. Cleaves one nucleotide into the double-stranded DNA from the junction in flap DNA, leaving a nick for ligation. Also involved in the base excision repair (BER) pathway. Acts as a genome stabilization factor that prevents flaps from equilibrating into structures that lead to duplications and deletions. Also possesses 5'-3' exonuclease activity on nicked or gapped double-stranded DNA. This is Flap endonuclease 1 from Methanosphaerula palustris (strain ATCC BAA-1556 / DSM 19958 / E1-9c).